The primary structure comprises 321 residues: Probable NAD(P)H-dependent D-xylose reductase xyl1 (321 aa).

Y50 acts as the Proton donor in catalysis. Residue H112 participates in substrate binding. NAD(+) contacts are provided by residues 166–167, 215–224, and 271–281; these read SN, SSFGPLSFVE, and KSNDPTRLAQN.

This sequence belongs to the aldo/keto reductase family.

The catalysed reaction is xylitol + NAD(+) = D-xylose + NADH + H(+). It catalyses the reaction xylitol + NADP(+) = D-xylose + NADPH + H(+). The protein operates within carbohydrate metabolism; D-xylose degradation. In terms of biological role, catalyzes the initial reaction in the xylose utilization pathway by reducing D-xylose into xylitol. Xylose is a major component of hemicelluloses such as xylan. Most fungi utilize D-xylose via three enzymatic reactions, xylose reductase (XR), xylitol dehydrogenase (XDH), and xylulokinase, to form xylulose 5-phosphate, which enters pentose phosphate pathway. The polypeptide is Probable NAD(P)H-dependent D-xylose reductase xyl1 (xyl1) (Neosartorya fischeri (strain ATCC 1020 / DSM 3700 / CBS 544.65 / FGSC A1164 / JCM 1740 / NRRL 181 / WB 181) (Aspergillus fischerianus)).